Consider the following 596-residue polypeptide: Succinate dehydrogenase flavoprotein subunit (596 aa).

Residues 18–23 (GAGGAG), 41–56 (TKLF…AQGG), and Asp-225 each bind FAD. His-49 is subject to Tele-8alpha-FAD histidine. His-246 and Thr-258 together coordinate substrate. Arg-290 acts as the Proton acceptor in catalysis. His-357 provides a ligand contact to substrate. Glu-391 contributes to the FAD binding site. Arg-402 provides a ligand contact to substrate. Position 407–408 (407–408 (SL)) interacts with FAD.

The protein belongs to the FAD-dependent oxidoreductase 2 family. FRD/SDH subfamily. In terms of assembly, part of an enzyme complex containing four subunits: a flavoprotein, an iron-sulfur, cytochrome b-556, and a hydrophobic anchor protein. The cofactor is FAD.

It is found in the cell inner membrane. It catalyses the reaction a quinone + succinate = fumarate + a quinol. The protein operates within carbohydrate metabolism; tricarboxylic acid cycle; fumarate from succinate (bacterial route): step 1/1. The protein is Succinate dehydrogenase flavoprotein subunit (sdhA) of Rickettsia conorii (strain ATCC VR-613 / Malish 7).